An 827-amino-acid polypeptide reads, in one-letter code: Valine--tRNA ligase (827 aa).

The short motif at 41-51 is the 'HIGH' region element; it reads PNVTGQLHLGH. A 'KMSKS' region motif is present at residues 511–515; that stretch reads KMTKS. ATP is bound at residue Lys514. A coiled-coil region spans residues 765-827; sequence ENLSKEKAQK…KELLDEKIIE (63 aa).

It belongs to the class-I aminoacyl-tRNA synthetase family. ValS type 1 subfamily. Monomer.

The protein resides in the cytoplasm. It catalyses the reaction tRNA(Val) + L-valine + ATP = L-valyl-tRNA(Val) + AMP + diphosphate. Catalyzes the attachment of valine to tRNA(Val). As ValRS can inadvertently accommodate and process structurally similar amino acids such as threonine, to avoid such errors, it has a 'posttransfer' editing activity that hydrolyzes mischarged Thr-tRNA(Val) in a tRNA-dependent manner. This is Valine--tRNA ligase from Mycoplasmopsis pulmonis (strain UAB CTIP) (Mycoplasma pulmonis).